The sequence spans 342 residues: Isopentenyl-diphosphate delta-isomerase (342 aa).

12 to 13 (RK) serves as a coordination point for substrate. FMN-binding positions include 71 to 73 (AMT), serine 101, and asparagine 129. 101–103 (SQR) serves as a coordination point for substrate. Glutamine 163 is a substrate binding site. Glutamate 164 is a binding site for Mg(2+). FMN-binding positions include lysine 195, threonine 225, 272-274 (GIR), and 293-294 (AR).

It belongs to the IPP isomerase type 2 family. In terms of assembly, homooctamer. Dimer of tetramers. It depends on FMN as a cofactor. NADPH is required as a cofactor. Mg(2+) serves as cofactor.

The protein localises to the cytoplasm. The catalysed reaction is isopentenyl diphosphate = dimethylallyl diphosphate. In terms of biological role, involved in the biosynthesis of isoprenoids. Catalyzes the 1,3-allylic rearrangement of the homoallylic substrate isopentenyl (IPP) to its allylic isomer, dimethylallyl diphosphate (DMAPP). This is Isopentenyl-diphosphate delta-isomerase from Mycolicibacterium vanbaalenii (strain DSM 7251 / JCM 13017 / BCRC 16820 / KCTC 9966 / NRRL B-24157 / PYR-1) (Mycobacterium vanbaalenii).